The following is a 1185-amino-acid chain: Syntaxin-binding protein 5-like (1185 aa).

Methionine 1 is subject to N-acetylmethionine. Residues 15–44 (ASSPGSGSSSGSNSGGAGSGSVHPGGTAGL) form a disordered region. The segment covering 16–26 (SSPGSGSSSGS) has biased composition (low complexity). 10 WD repeats span residues 73-106 (TALAFDPVQKILAIGTRTGAIRILGRPGVDCYCQ), 113-152 (VLQLQFLINEGALVSASSDDTLHLWNLRQKRPAILHSLKF), 157-193 (ITYCHLPFQSKWLYVGTERGNTHIVNIESFILSGYVI), 212-246 (HLSDSPRDEGKLLIGYENGTVVFWDLKSKRAELRV), 252-284 (IHSIDWHHEGKQFMCSHSDGSLTLWNLKSPSRP), 306-348 (PILK…KAIT), 356-390 (IVEFLTLCETPYPNEFQEPYAVAVLLEKDLIVVDL), 412-489 (TCTA…YKLK), 517-628 (QMIY…DLVI), and 642-704 (TSLS…IADN). At threonine 567 the chain carries Phosphothreonine. The tract at residues 567–601 (TPEPETSPPFPDLSSQLPPSRSLSGSTNTVSSEGV) is disordered. Serine 573, serine 588, and serine 592 each carry phosphoserine. Over residues 578-592 (DLSSQLPPSRSLSGS) the composition is skewed to low complexity. Residue threonine 595 is modified to Phosphothreonine. At serine 598 the chain carries Phosphoserine. Arginine 708 is subject to Omega-N-methylarginine. Residues 747 to 768 (TSDHVNGHCTSPTSQSCSSGKR) are compositionally biased toward polar residues. The interval 747 to 770 (TSDHVNGHCTSPTSQSCSSGKRLS) is disordered. 11 positions are modified to phosphoserine: serine 762, serine 764, serine 765, serine 770, serine 771, serine 792, serine 799, serine 811, serine 819, serine 821, and serine 822. WD repeat units follow at residues 831 to 888 (ITAL…SGTF), 897 to 968 (TFSC…QTCL), 973 to 1017 (ITET…LDVN), and 1031 to 1054 (CFTNEGQALYLVSPTEIQRLTYSQ). Position 1092 is a phosphothreonine (threonine 1092). The v-SNARE coiled-coil homology domain occupies 1120–1180 (SIEGMKGAAG…HELMLKYKDK (61 aa)).

It belongs to the WD repeat L(2)GL family. In terms of assembly, interacts with STX1A and STX4. In terms of processing, phosphorylated, leading to STXBP5L increased turnover and subsequent de-repression of insulin secretion. Phosphorylated on serine residues in response to glucose or phorbol esters. Post-translationally, ubiquitinated by the E3 ligase SYVN1, leading to STXBP5L proteasomal degradation. In terms of tissue distribution, detected in hippocampus and cerebellum. Expressed in pancreatic beta-cells where it modulates insulin secretion.

It localises to the cytoplasm. The protein resides in the cell membrane. Its subcellular location is the membrane. Plays a role in vesicle trafficking and exocytosis inhibition. In pancreatic beta-cells, inhibits insulin secretion probably by interacting with and regulating STX1A and STX4, key t-SNARE proteins involved in the fusion of insulin granules to the plasma membrane. Also plays a role in neurotransmitter release by inhibiting basal acetylcholine release from axon terminals and by preventing synaptic fatigue upon repetitive stimulation. Promotes as well axonal outgrowth. The polypeptide is Syntaxin-binding protein 5-like (Stxbp5l) (Mus musculus (Mouse)).